The sequence spans 117 residues: MAAAAAAGSGTPREEEGPAGEAAASQPQAPTSVPGARLSRLPLARVKALVKADPDVTLAGQEAIFILARAAELFVETIAKDAYCCAQQGKRKTLQRRDLDNAIEAVDEFAFLEGTLD.

Residues 1 to 36 form a disordered region; sequence MAAAAAAGSGTPREEEGPAGEAAASQPQAPTSVPGA. N-acetylalanine is present on Ala2. Residue Thr11 is modified to Phosphothreonine. A compositionally biased stretch (low complexity) spans 19–30; that stretch reads AGEAAASQPQAP. Ser25 carries the post-translational modification Phosphoserine.

Component of the DNA polymerase epsilon complex consisting of four subunits: the catalytic subunit POLE and the accessory subunits POLE2, POLE3 and POLE4. Interaction with POLE3 is a prerequisite for further binding with POLE and POLE2.

It localises to the nucleus. In terms of biological role, accessory component of the DNA polymerase epsilon complex. Participates in DNA repair and in chromosomal DNA replication. This Homo sapiens (Human) protein is DNA polymerase epsilon subunit 4 (POLE4).